The sequence spans 620 residues: LysM domain receptor-like kinase 3 (620 aa).

An N-terminal signal peptide occupies residues 1–23; that stretch reads MNLKNGLLLFILFLDCVFFKVES. At 24-231 the chain is on the extracellular side; it reads KCVKGCDVAL…YSRTGIAKGS (208 aa). Intrachain disulfides connect Cys-25–Cys-92, Cys-29–Cys-154, and Cys-90–Cys-152. An N-linked (GlcNAc...) asparagine glycan is attached at Asn-46. In terms of domain architecture, LysM 1; degenerate spans 46–72; it reads NISNFMQSKIVLTNSFDVIMSYNRDVV. 2 consecutive LysM domains span residues 102–148 and 167–210; these read FEYT…KINV and VTYP…VFIP. Chitin-binding positions include 108-114 and 136-142; these read EGDDYDL and DPNHIPV. 2 N-linked (GlcNAc...) asparagine glycosylation sites follow: Asn-147 and Asn-199. A helical transmembrane segment spans residues 232 to 252; that stretch reads AVGIAMAGIFGLLLFVIYIYA. Over 253 to 620 the chain is Cytoplasmic; it reads KYFQKKEEEK…QSLINLLSTR (368 aa). Over residues 265–278 the composition is skewed to polar residues; that stretch reads LPQTSRAFSTQDAS. The interval 265–292 is disordered; sequence LPQTSRAFSTQDASGSAEYETSGSSGHA. 2 positions are modified to phosphoserine: Ser-269 and Ser-273. The region spanning 322–595 is the Protein kinase domain; the sequence is FSLDNKIGQG…RSIVVALMTL (274 aa). Residues 328–336 and Lys-349 each bind ATP; that span reads IGQGGFGAV. The active-site Proton acceptor is the Asp-441.

The protein belongs to the protein kinase superfamily. Ser/Thr protein kinase family. Forms homodimers and homooligomers. Forms heteromeric complexes with NFP at the cell periphery in nodules. Interacts with PUB1. In terms of processing, autophosphorylated. In terms of tissue distribution, expressed in the epidermal and root hair cells of the developing root hair zone during nonsymbiotic growth. Accumulates in roots and nodules during symbiotic growth with rhizobia. Localized at the cell periphery in a narrow zone of about two cell layers (e.g. L1/L2 zone) at the nodule apex upon infection by rhizobia, from the meristem to the infection zone (at protein level).

The protein resides in the cell membrane. The protein localises to the vacuole lumen. It carries out the reaction L-seryl-[protein] + ATP = O-phospho-L-seryl-[protein] + ADP + H(+). It catalyses the reaction L-threonyl-[protein] + ATP = O-phospho-L-threonyl-[protein] + ADP + H(+). Functionally, putative receptor for S.meliloti Nod factor signals essential for the establishment of the nitrogen-fixing, root nodule symbiosis with S.meliloti. Involved in the control of root hair curling after S.meliloti infection, probably by modulating the reorganization of the microtubular cytoskeleton in epidermal and cortical cells. Regulates a subset of Nod factor-induced genes. In Medicago truncatula (Barrel medic), this protein is LysM domain receptor-like kinase 3.